Reading from the N-terminus, the 255-residue chain is Triosephosphate isomerase (255 aa).

Substrate is bound at residue 9 to 11; it reads NWK. His95 serves as the catalytic Electrophile. The Proton acceptor role is filled by Glu167. Residues Gly173, Ser212, and 233–234 each bind substrate; that span reads GG.

It belongs to the triosephosphate isomerase family. As to quaternary structure, homodimer.

The protein localises to the cytoplasm. It catalyses the reaction D-glyceraldehyde 3-phosphate = dihydroxyacetone phosphate. The protein operates within carbohydrate biosynthesis; gluconeogenesis. It participates in carbohydrate degradation; glycolysis; D-glyceraldehyde 3-phosphate from glycerone phosphate: step 1/1. Involved in the gluconeogenesis. Catalyzes stereospecifically the conversion of dihydroxyacetone phosphate (DHAP) to D-glyceraldehyde-3-phosphate (G3P). The chain is Triosephosphate isomerase from Serratia proteamaculans (strain 568).